Consider the following 44-residue polypeptide: Conotoxin Fi11.11 (44 aa).

4 disulfides stabilise this stretch: Cys-1-Cys-15, Cys-8-Cys-20, Cys-14-Cys-24, and Cys-19-Cys-28. The residue at position 30 (Asn-30) is an Asparagine amide. Residues 35-44 (QVPLKSFGQR) constitute a propeptide that is removed on maturation.

Belongs to the conotoxin I2 superfamily. In terms of tissue distribution, expressed by the venom duct.

It is found in the secreted. The chain is Conotoxin Fi11.11 from Conus figulinus (Fig cone).